The chain runs to 123 residues: MGTATGASYFQRGSLFWFTVIAVSFSYYTWVVFWPQSIPYQSLGPLGPFTKYLVDHYHTLLRNGYWLAWLVHVGESLYALVLCRRKGITDSQAQLLWFLQTFLFGVASLSILFAYRPKHQKHN.

A run of 3 helical transmembrane segments spans residues 15-35 (LFWFTVIAVSFSYYTWVVFWP), 63-83 (NGYWLAWLVHVGESLYALVLC), and 95-115 (LLWFLQTFLFGVASLSILFAY).

The protein localises to the membrane. This chain is Transmembrane protein 254 (Tmem254), found in Rattus norvegicus (Rat).